Reading from the N-terminus, the 144-residue chain is EF-hand calcium-binding domain-containing protein 8 (144 aa).

2 consecutive EF-hand domains span residues 52–86 (IHLAKIEKMFEEDINSTGALGMDAFIKAMKKVLSS) and 87–122 (VSDEMLKELFLKVDSDCEGFVTWQKYVDYMMREFQG).

This Homo sapiens (Human) protein is EF-hand calcium-binding domain-containing protein 8 (EFCAB8).